Consider the following 339-residue polypeptide: UDP-N-acetylenolpyruvoylglucosamine reductase (339 aa).

The region spanning 16–188 is the FAD-binding PCMH-type domain; it reads GIAATARYYS…LQVTLRLNKQ (173 aa). R164 is a catalytic residue. S238 (proton donor) is an active-site residue. E334 is a catalytic residue.

The protein belongs to the MurB family. Requires FAD as cofactor.

It localises to the cytoplasm. The catalysed reaction is UDP-N-acetyl-alpha-D-muramate + NADP(+) = UDP-N-acetyl-3-O-(1-carboxyvinyl)-alpha-D-glucosamine + NADPH + H(+). The protein operates within cell wall biogenesis; peptidoglycan biosynthesis. Its function is as follows. Cell wall formation. The protein is UDP-N-acetylenolpyruvoylglucosamine reductase of Amoebophilus asiaticus (strain 5a2).